The chain runs to 68 residues: Movement protein TGBp3 (68 aa).

Over 1–6 (MFSGKE) the chain is Lumenal. Residues 7 to 26 (ITLFALSTLIALIVLNYMSA) traverse the membrane as a helical segment. Residues 27–68 (TPNPVCLIELTGHSAVLRGNNCESLTSGVIEALSAHLHGLRN) lie on the Cytoplasmic side of the membrane.

It belongs to the Tymovirales TGBp3 protein family.

Its subcellular location is the host endoplasmic reticulum membrane. Functionally, plays a role in viral cell-to-cell propagation, by facilitating genome transport to neighboring plant cells through plasmosdesmata. May induce the formation of granular vesicles derived from the Endoplasmic reticulum, which align on actin filaments. The protein is Movement protein TGBp3 of Papaya mosaic potexvirus (PMV).